Here is a 348-residue protein sequence, read N- to C-terminus: Mitogen-activated protein kinase kinase 5 (348 aa).

2 disordered regions span residues 1–26 (MKPI…DLSL) and 35–54 (LAVP…PASS). Serine 6 is subject to Phosphoserine; by ASK7. Positions 70-325 (LERVNRIGSG…AQQLLQHPFI (256 aa)) constitute a Protein kinase domain. Residues 76–84 (IGSGAGGTV) and lysine 99 each bind ATP. Residue aspartate 187 is the Proton acceptor of the active site. Threonine 215 bears the Phosphothreonine mark. Position 221 is a phosphoserine; by ASK7 (serine 221). Serine 221 is subject to Phosphoserine. Threonine 225 carries the post-translational modification Phosphothreonine; by ASK7. Arginine 313 is subject to ADP-ribosylarginine; by HopF2.

This sequence belongs to the protein kinase superfamily. STE Ser/Thr protein kinase family. MAP kinase kinase subfamily. In terms of assembly, interacts with P.syringae type III effector HopF2. Interacts with BZR1. Interacts with MPK6 and MPK3. Interacts with RACK1A, RACK1B and RACK1C. Interacts with MAPKKK5 mainly in the cytosol. Binds to BASL. Interacts with MAPKKK20. Post-translationally, phosphorylation at Thr-215 and Ser-221 by MAP kinase kinase kinases positively regulates kinase activity. Phosphorylated by MAPKKK5 and MAPKKK20 in response to abscisic acid (ABA). In terms of processing, ADP-ribosylation at Arg-313 by P.syringae type III effector HopF2 reduces the ability of the protein to phosphorylate downstream MPK6. As to expression, expressed higher in stems and leaves than in flowers and roots.

The enzyme catalyses L-seryl-[protein] + ATP = O-phospho-L-seryl-[protein] + ADP + H(+). It carries out the reaction L-threonyl-[protein] + ATP = O-phospho-L-threonyl-[protein] + ADP + H(+). The catalysed reaction is L-tyrosyl-[protein] + ATP = O-phospho-L-tyrosyl-[protein] + ADP + H(+). Activated through serine and threonine phosphorylation by MEKK1 and MAPKKK20 in response to abscisic acid (ABA). Inhibited through phosphorylation by GSK3/Shaggy-like kinase ASKs. Inhibited through ADP-Ribosylation by P.syringae HopF2. Activated after high light stress. Functionally, mitogen-activated protein kinase kinase (MAPKK) which regulates abscisic acid (ABA) responses in a MAPKKK20-MKK5-MPK6 cascade involved in root growth (e.g. root cell division and elongation) and stomatal response, probably via MAPK6 activation by protein phosphorylation. Involved in the second phase of hydrogen peroxide generation during hypersensitive response-like cell death. Involved in the innate immune MAP kinase signaling cascade (MEKK1, MKK4/MKK5 and MPK3/MPK6) downstream of bacterial flagellin receptor FLS2. Activates by phosphorylation the downstream MPK3 and MPK6. YDA-MKK4/MKK5-MPK3/MPK6 module regulates stomatal cell fate before the guard mother cell (GMC) is specified. This MAPK cascade also functions downstream of the ER receptor in regulating coordinated local cell proliferation, which shapes the morphology of plant organs. MKK4 and MKK5 participate in the regulation of floral organ abscission. Target of the Pseudomonas syringae type III effector HopF2, that inhibits the activation of the downstream MPK6 and PAMP-triggered immunity. Plays a critical role in high light stress tolerance by the mediation of the Cu/Zn SODs CSD1 and CSD2 gene expression. Phosphorylates BZR1 in vitro. The chain is Mitogen-activated protein kinase kinase 5 from Arabidopsis thaliana (Mouse-ear cress).